The chain runs to 1010 residues: PHD finger protein 20 (1010 aa).

Tudor domains are found at residues 4-69 and 83-147; these read HPPN…RPLE and GSSE…GNAR. 2 disordered regions span residues 142 to 373 and 483 to 609; these read IVGN…EGQL and EKSP…GKLK. Positions 147–246 are enriched in basic and acidic residues; sequence RPKETDHKSL…VEKKPEKDLV (100 aa). A Phosphoserine modification is found at Ser-159. The segment at residues 257–269 is a DNA-binding region (a.T hook); sequence KRKRGRPPSITPT. The span at 267–280 shows a compositional bias: polar residues; it reads TPTAVDSNSQTLQP. Composition is skewed to basic and acidic residues over residues 292-325, 483-493, and 525-541; these read KRSDTPLKRPRLDKNSPQEQSKKRSENSDKDLSR, EKSPEPEEGPG, and AKEKEKTKEKKFKELVR. The C2H2-type zinc-finger motif lies at 455–485; that stretch reads FRCKVLDCLKFFRKAKLLHYHMKYFHGMEKS. Basic residues predominate over residues 542 to 554; it reads VKPKKKKKKKKKT. Residues 657–703 form a PHD-type zinc finger; that stretch reads RCICEVQEENDFMIQCEECQCWQHGVCMGLLEENVPEKYTCYVCQDP. Positions 804-827 are disordered; sequence RSEESPSYRTLNGAVEKPSPLPRS. An N6-acetyllysine modification is found at Lys-841. 2 positions are modified to phosphoserine: Ser-876 and Ser-878. Positions 877 to 902 are disordered; sequence LSPRLGWPIDQDRSRGDIDPKPSSPK. Positions 886 to 902 are enriched in basic and acidic residues; sequence DQDRSRGDIDPKPSSPK.

As to quaternary structure, homodimer; disulfide-linked. Component of some MLL1/MLL complex, at least composed of the core components KMT2A/MLL1, ASH2L, HCFC1, WDR5 and RBBP5, as well as the facultative components BACC1, CHD8, E2F6, HSP70, INO80C, KANSL1, LAS1L, MAX, MCRS1, MGA, MYST1/MOF, PELP1, PHF20, PRP31, RING2, RUVB1/TIP49A, RUVB2/TIP49B, SENP3, TAF1, TAF4, TAF6, TAF7, TAF9 and TEX10. Component of the NSL complex at least composed of MOF/KAT8, KANSL1, KANSL2, KANSL3, MCRS1, PHF20, OGT1/OGT, WDR5 and HCFC1. In terms of processing, ubiquitinated by TRIM26; leading to proteasomal degradation.

It localises to the nucleus. In terms of biological role, contributes to methyllysine-dependent p53/TP53 stabilization and up-regulation after DNA damage. Methyllysine-binding protein, component of the MOF histone acetyltransferase protein complex. Not required for maintaining the global histone H4 'Lys-16' acetylation (H4K16ac) levels or locus specific histone acetylation, but instead works downstream in transcriptional regulation of MOF target genes. As part of the NSL complex it may be involved in acetylation of nucleosomal histone H4 on several lysine residues. The chain is PHD finger protein 20 (Phf20) from Mus musculus (Mouse).